The primary structure comprises 223 residues: Thiamine-phosphate synthase (223 aa).

4-amino-2-methyl-5-(diphosphooxymethyl)pyrimidine is bound by residues 42–46 and Asn-83; that span reads QLRDK. Asp-84 and Asp-103 together coordinate Mg(2+). Ser-122 contributes to the 4-amino-2-methyl-5-(diphosphooxymethyl)pyrimidine binding site. Position 148–150 (148–150) interacts with 2-[(2R,5Z)-2-carboxy-4-methylthiazol-5(2H)-ylidene]ethyl phosphate; sequence TPT. Lys-151 is a 4-amino-2-methyl-5-(diphosphooxymethyl)pyrimidine binding site. Residue Gly-179 coordinates 2-[(2R,5Z)-2-carboxy-4-methylthiazol-5(2H)-ylidene]ethyl phosphate.

It belongs to the thiamine-phosphate synthase family. Mg(2+) is required as a cofactor.

The catalysed reaction is 2-[(2R,5Z)-2-carboxy-4-methylthiazol-5(2H)-ylidene]ethyl phosphate + 4-amino-2-methyl-5-(diphosphooxymethyl)pyrimidine + 2 H(+) = thiamine phosphate + CO2 + diphosphate. It carries out the reaction 2-(2-carboxy-4-methylthiazol-5-yl)ethyl phosphate + 4-amino-2-methyl-5-(diphosphooxymethyl)pyrimidine + 2 H(+) = thiamine phosphate + CO2 + diphosphate. It catalyses the reaction 4-methyl-5-(2-phosphooxyethyl)-thiazole + 4-amino-2-methyl-5-(diphosphooxymethyl)pyrimidine + H(+) = thiamine phosphate + diphosphate. It participates in cofactor biosynthesis; thiamine diphosphate biosynthesis; thiamine phosphate from 4-amino-2-methyl-5-diphosphomethylpyrimidine and 4-methyl-5-(2-phosphoethyl)-thiazole: step 1/1. In terms of biological role, condenses 4-methyl-5-(beta-hydroxyethyl)thiazole monophosphate (THZ-P) and 2-methyl-4-amino-5-hydroxymethyl pyrimidine pyrophosphate (HMP-PP) to form thiamine monophosphate (TMP). The sequence is that of Thiamine-phosphate synthase from Mycobacterium avium (strain 104).